The sequence spans 397 residues: MAVQETDLDKQLLQLSIQVADLAARTDSRGSQKIQDFLIKTQQSLESPWETLMRYYDLDFQHVAIRIGCDMQVFTTLTTADKPMKLQDIANVNGASERLLGRVLRYLASINTIEEVGKDTFEANHITRTLSKPGIEGGIRLSSACQRPTNSALPDLLVERGFQDITSATETAFNKAWASREPFFTWVRSQPKIFEYLRLALDVQFREDWLNAFPLESHLGDFASRADPEKVLFVDVGGNLGIQCRGLKAKFPHLSGRIILEDLQETIDVALALEGVETLAQDYLTEQKVKGAKFYYYRNIFHDNPDDRCRLILDALKPAMEESSLLLIDDKVLLNQGSHRHVTMLDLAMMAQVASHERTRAQWQALLEGAGWKIEDIFQYSHEYDSIIVVKPAAQNA.

Residue Asp-262 participates in S-adenosyl-L-methionine binding. His-302 serves as the catalytic Proton acceptor.

Belongs to the class I-like SAM-binding methyltransferase superfamily. Cation-independent O-methyltransferase family. The cofactor is S-adenosyl-L-methionine.

The protein operates within mycotoxin biosynthesis. Its function is as follows. 16-O-methyltransferase; part of the gene cluster that mediates the biosynthesis of the diterpene glucoside brassicicene C. In the first step of the brassicicene C biosynthesis, the bifunctional diterpene synthase bsc8 that possesses both prenyl transferase and terpene cyclase activity, converts isopentenyl diphosphate and dimethylallyl diphosphate into geranylgeranyl diphosphate (GGDP) that is further converted into fusicocca-2,10(14)-diene, the first precursor for brassicicene C. Fusicocca-2,10(14)-diene is then substrate of cytochrome P450 monooxygenase bsc1 for hydroxylation at the C-8 position. Oxidation at C-16 position to aldehyde is then catalyzed by the cytochrome P450 monooyxygenase bsc7, yielding fusicocca-2,10(14)-diene-8-beta,16-diol. Follows the isomerization of the double bond and reduction of aldehyde to alcohol catalyzed by the short-chain dehydrogenase/reductase bsc3 to yield the diol compound fusicocca-1,10(14)-diene-8 beta,16-diol. The next step is the oxidation at the C-3 position of fusicocca-2,10(14)-diene-8-beta,16-diol catalyzed by the alpha-ketoglutarate dependent dioxygenase bsc9, to produce a triol compound. Methylation of the hydroxy group at position 16 is performed by the methyltransferase bsc6. 16-O-methylation is followed by oxidation at the C-13 position to ketone and an alkyl shift of the methyl group leads to brassicicene C. Although the probable acetyltransferase bsc4 is included in the gene cluster, no acetylation reactions are necessary for brassicicene C biosynthesis. However, the fact that brassicicene E, which is a structurally related compound having an acetoxy group at position 12, was previously isolated from another strain of A.brassicicola suggests that the ATCC 96836 strain might also produce a small amount of brassicicene E. This is 16-O-methyltransferase bsc6 from Alternaria brassicicola (Dark leaf spot agent).